The sequence spans 271 residues: MSQGYLPFPNIDPVFFSIGPISVRWYGLMYLFGFLFAMWLANRRADKPGSGWTREQVSDLLFAGFLGVVLGGRIGYVLFYNFDLFLADPIYLFKVWTGGMSFHGGLLGVITAMLWYAKKNGRTFFGVADFVAPLVPFGLGVGRLGNFMNGELWGRVTDVPWAMVFPTGGPLPRHPSQLYEMALEGVVLFFILNWFIRKPRPLGSVSGLFLAGYGTFRFLVEYVREPDAQLGLFGGFISMGQILSSPMIIGGLALMAWAYKRGHYQDKVTVK.

7 helical membrane passes run 21–41, 60–80, 95–115, 124–144, 176–196, 203–223, and 230–250; these read ISVRWYGLMYLFGFLFAMWLA, LLFAGFLGVVLGGRIGYVLFY, VWTGGMSFHGGLLGVITAMLW, FFGVADFVAPLVPFGLGVGRL, SQLYEMALEGVVLFFILNWFI, GSVSGLFLAGYGTFRFLVEYV, and LGLFGGFISMGQILSSPMIIG. Arginine 143 contributes to the a 1,2-diacyl-sn-glycero-3-phospho-(1'-sn-glycerol) binding site.

Belongs to the Lgt family.

It localises to the cell inner membrane. It carries out the reaction L-cysteinyl-[prolipoprotein] + a 1,2-diacyl-sn-glycero-3-phospho-(1'-sn-glycerol) = an S-1,2-diacyl-sn-glyceryl-L-cysteinyl-[prolipoprotein] + sn-glycerol 1-phosphate + H(+). It functions in the pathway protein modification; lipoprotein biosynthesis (diacylglyceryl transfer). Functionally, catalyzes the transfer of the diacylglyceryl group from phosphatidylglycerol to the sulfhydryl group of the N-terminal cysteine of a prolipoprotein, the first step in the formation of mature lipoproteins. The chain is Phosphatidylglycerol--prolipoprotein diacylglyceryl transferase from Vibrio vulnificus (strain CMCP6).